Consider the following 97-residue polypeptide: Intermembrane phospholipid transport system binding protein MlaB (97 aa).

Residues 1 to 97 (MSESLSWMQT…YNLPADVLPR (97 aa)) form the STAS domain.

As to quaternary structure, the complex is composed of two ATP-binding proteins (MlaF), two transmembrane proteins (MlaE), two cytoplasmic solute-binding proteins (MlaB) and six periplasmic solute-binding proteins (MlaD).

It localises to the cytoplasm. In terms of biological role, part of the ABC transporter complex MlaFEDB, which is involved in a phospholipid transport pathway that maintains lipid asymmetry in the outer membrane by retrograde trafficking of phospholipids from the outer membrane to the inner membrane. MlaB plays critical roles in both the assembly and activity of the complex. May act by modulating MlaF structure and stability. This Escherichia coli (strain K12) protein is Intermembrane phospholipid transport system binding protein MlaB.